The primary structure comprises 214 residues: MIDQKQTNNLCLRWKGKQRRIGITGGIASGKTIIGDFLFQAKQWPILDADLYAHEALSAESEIVKKVWLRYGSKIIKNSSKNDQIINRKALAKIVFQNELEKKWLEGIIHPFVNKRIEEELEKSKSNSIVILIIPLLFEKNYTGLCSEICYIDCPRSMQLKRLQSRDNLSIKEANQRIDAQWANSLKKQFADHIINNSNDDETWKLQLKKLYKF.

A DPCK domain is found at 20-214 (RIGITGGIAS…KLQLKKLYKF (195 aa)). 28–33 (ASGKTI) is a binding site for ATP.

The protein belongs to the CoaE family.

It localises to the cytoplasm. It carries out the reaction 3'-dephospho-CoA + ATP = ADP + CoA + H(+). It functions in the pathway cofactor biosynthesis; coenzyme A biosynthesis; CoA from (R)-pantothenate: step 5/5. In terms of biological role, catalyzes the phosphorylation of the 3'-hydroxyl group of dephosphocoenzyme A to form coenzyme A. In Prochlorococcus marinus (strain NATL2A), this protein is Dephospho-CoA kinase.